The sequence spans 212 residues: Ependymin (212 aa).

A signal peptide spans 1 to 20; sequence MRLTGLLCVALWSASAVVLA. 3 N-linked (GlcNAc...) asparagine glycosylation sites follow: Asn-69, Asn-92, and Asn-112.

Belongs to the ependymin family. In terms of assembly, forms disulfide-linked dimers. Binds calcium through the terminal sialic acids. In terms of tissue distribution, EPDs are synthesized in the meninx and secreted in the cerebrospinal fluid.

Its subcellular location is the secreted. In terms of biological role, may play a role in neural plasticity. May be involved during axon regeneration. The polypeptide is Ependymin (epd) (Clupea harengus (Atlantic herring)).